Here is a 339-residue protein sequence, read N- to C-terminus: Phosphate acyltransferase (339 aa).

Belongs to the PlsX family. Homodimer. Probably interacts with PlsY.

It localises to the cytoplasm. The enzyme catalyses a fatty acyl-[ACP] + phosphate = an acyl phosphate + holo-[ACP]. It participates in lipid metabolism; phospholipid metabolism. In terms of biological role, catalyzes the reversible formation of acyl-phosphate (acyl-PO(4)) from acyl-[acyl-carrier-protein] (acyl-ACP). This enzyme utilizes acyl-ACP as fatty acyl donor, but not acyl-CoA. The chain is Phosphate acyltransferase from Vesicomyosocius okutanii subsp. Calyptogena okutanii (strain HA).